The primary structure comprises 86 residues: UPF0437 protein Ava_4254 (86 aa).

It belongs to the UPF0437 family.

In Trichormus variabilis (strain ATCC 29413 / PCC 7937) (Anabaena variabilis), this protein is UPF0437 protein Ava_4254.